The primary structure comprises 862 residues: Protein argonaute-2 (862 aa).

Positions 232-351 (PVIEFMCEVL…LPLEVCNIVA (120 aa)) constitute a PAZ domain. Interaction with guide RNA stretches follow at residues 314–319 (YFKDRH) and 527–569 (GKTP…LCLK). Residues 520 to 821 (LVVVILPGKT…VAFRARYHLV (302 aa)) enclose the Piwi domain. Residues 590–593 (FQQP) form an interaction with GW182 family members region. A divalent metal cation is bound at residue D600. An interaction with GW182 family members region spans residues 653–663 (LIQFYKSTRFK). D672 contributes to the a divalent metal cation binding site. Interaction with guide RNA regions lie at residues 712–713 (KR), 756–764 (HAGIQGTSR), and 793–815 (YVRC…VAFR). A divalent metal cation is bound at residue H810. Positions 825–847 (HDSAEGSHTSGQSNGRDQQALAK) are disordered. The segment covering 830–841 (GSHTSGQSNGRD) has biased composition (polar residues).

Belongs to the argonaute family. Ago subfamily. As to quaternary structure, component of the RISC loading complex (RLC), or micro-RNA (miRNA) loading complex (miRLC), which is composed of dicer1, ago2 and tarbp2. Note that the trimeric RLC/miRLC is also referred to as RISC. Mg(2+) serves as cofactor. Mn(2+) is required as a cofactor.

It localises to the cytoplasm. It is found in the P-body. It carries out the reaction Endonucleolytic cleavage to 5'-phosphomonoester.. Required for RNA-mediated gene silencing (RNAi) by the RNA-induced silencing complex (RISC). The 'minimal RISC' appears to include ago2 bound to a short guide RNA such as a microRNA (miRNA) or short interfering RNA (siRNA). These guide RNAs direct RISC to complementary mRNAs that are targets for RISC-mediated gene silencing. The precise mechanism of gene silencing depends on the degree of complementarity between the miRNA or siRNA and its target. Binding of RISC to a perfectly complementary mRNA generally results in silencing due to endonucleolytic cleavage of the mRNA specifically by ago2. Binding of RISC to a partially complementary mRNA results in silencing through inhibition of translation, and this is independent of endonuclease activity. The inhibition of translational initiation leads to the accumulation of the affected mRNA in cytoplasmic processing bodies (P-bodies), where mRNA degradation may subsequently occur. In Xenopus laevis (African clawed frog), this protein is Protein argonaute-2 (ago2).